Reading from the N-terminus, the 178-residue chain is Large ribosomal subunit protein uL6 (178 aa).

Belongs to the universal ribosomal protein uL6 family. As to quaternary structure, part of the 50S ribosomal subunit.

Its function is as follows. This protein binds to the 23S rRNA, and is important in its secondary structure. It is located near the subunit interface in the base of the L7/L12 stalk, and near the tRNA binding site of the peptidyltransferase center. This Thermobifida fusca (strain YX) protein is Large ribosomal subunit protein uL6.